Reading from the N-terminus, the 874-residue chain is Alanine--tRNA ligase (874 aa).

Zn(2+) is bound by residues His562, His566, Cys664, and His668.

It belongs to the class-II aminoacyl-tRNA synthetase family. The cofactor is Zn(2+).

It is found in the cytoplasm. The enzyme catalyses tRNA(Ala) + L-alanine + ATP = L-alanyl-tRNA(Ala) + AMP + diphosphate. Its function is as follows. Catalyzes the attachment of alanine to tRNA(Ala) in a two-step reaction: alanine is first activated by ATP to form Ala-AMP and then transferred to the acceptor end of tRNA(Ala). Also edits incorrectly charged Ser-tRNA(Ala) and Gly-tRNA(Ala) via its editing domain. The sequence is that of Alanine--tRNA ligase from Shewanella denitrificans (strain OS217 / ATCC BAA-1090 / DSM 15013).